The primary structure comprises 96 residues: Co-chaperonin GroES (96 aa).

Belongs to the GroES chaperonin family. Heptamer of 7 subunits arranged in a ring. Interacts with the chaperonin GroEL.

Its subcellular location is the cytoplasm. Functionally, together with the chaperonin GroEL, plays an essential role in assisting protein folding. The GroEL-GroES system forms a nano-cage that allows encapsulation of the non-native substrate proteins and provides a physical environment optimized to promote and accelerate protein folding. GroES binds to the apical surface of the GroEL ring, thereby capping the opening of the GroEL channel. This chain is Co-chaperonin GroES, found in Paraburkholderia phytofirmans (strain DSM 17436 / LMG 22146 / PsJN) (Burkholderia phytofirmans).